The primary structure comprises 74 residues: DNA gyrase inhibitor YacG (74 aa).

Residues Cys-7, Cys-10, Cys-26, and Cys-30 each coordinate Zn(2+).

The protein belongs to the DNA gyrase inhibitor YacG family. As to quaternary structure, interacts with GyrB. The cofactor is Zn(2+).

In terms of biological role, inhibits all the catalytic activities of DNA gyrase by preventing its interaction with DNA. Acts by binding directly to the C-terminal domain of GyrB, which probably disrupts DNA binding by the gyrase. The sequence is that of DNA gyrase inhibitor YacG from Shewanella denitrificans (strain OS217 / ATCC BAA-1090 / DSM 15013).